A 400-amino-acid polypeptide reads, in one-letter code: Tryptophan--tRNA ligase (400 aa).

A 'HIGH' region motif is present at residues 12 to 20; that stretch reads PTGALHLGH. The insert stretch occupies residues 173–241; the sequence is REPGFEQKAL…RLFGYLEGAR (69 aa). Positions 265–269 match the 'KMSKS' region motif; that stretch reads KMSKS. Residue Lys268 coordinates ATP. Residues 280 to 305 form a disordered region; it reads KASVEKKVRTMPTDPARVRRTDPGDP. A compositionally biased stretch (basic and acidic residues) spans 295-304; the sequence is ARVRRTDPGD.

The protein belongs to the class-I aminoacyl-tRNA synthetase family. As to quaternary structure, homodimer.

It is found in the cytoplasm. It catalyses the reaction tRNA(Trp) + L-tryptophan + ATP = L-tryptophyl-tRNA(Trp) + AMP + diphosphate + H(+). The protein is Tryptophan--tRNA ligase (trpS) of Ralstonia nicotianae (strain ATCC BAA-1114 / GMI1000) (Ralstonia solanacearum).